A 361-amino-acid polypeptide reads, in one-letter code: 5-formaminoimidazole-4-carboxamide-1-(beta)-D-ribofuranosyl 5'-monophosphate synthetase (361 aa).

2 residues coordinate 5-amino-1-(5-phospho-beta-D-ribosyl)imidazole-4-carboxamide: H27 and S94. An ATP-grasp domain is found at R116–K348. ATP contacts are provided by residues K156–Y166, E199–V202, and E230. N258 is a 5-amino-1-(5-phospho-beta-D-ribosyl)imidazole-4-carboxamide binding site. Mg(2+)-binding residues include Q297 and E310.

The protein belongs to the phosphohexose mutase family. Homohexamer. Dimer of trimers. It depends on Mg(2+) as a cofactor. Mn(2+) is required as a cofactor.

The catalysed reaction is 5-amino-1-(5-phospho-beta-D-ribosyl)imidazole-4-carboxamide + formate + ATP = 5-formamido-1-(5-phospho-D-ribosyl)imidazole-4-carboxamide + ADP + phosphate. It participates in purine metabolism; IMP biosynthesis via de novo pathway; 5-formamido-1-(5-phospho-D-ribosyl)imidazole-4-carboxamide from 5-amino-1-(5-phospho-D-ribosyl)imidazole-4-carboxamide (formate route): step 1/1. With respect to regulation, inhibited by ADP. Functionally, catalyzes the ATP- and formate-dependent formylation of 5-aminoimidazole-4-carboxamide-1-beta-d-ribofuranosyl 5'-monophosphate (AICAR) to 5-formaminoimidazole-4-carboxamide-1-beta-d-ribofuranosyl 5'-monophosphate (FAICAR) in the absence of folates. The sequence is that of 5-formaminoimidazole-4-carboxamide-1-(beta)-D-ribofuranosyl 5'-monophosphate synthetase from Methanocaldococcus jannaschii (strain ATCC 43067 / DSM 2661 / JAL-1 / JCM 10045 / NBRC 100440) (Methanococcus jannaschii).